Here is a 223-residue protein sequence, read N- to C-terminus: Endonuclease NucS (223 aa).

It belongs to the NucS endonuclease family.

It localises to the cytoplasm. Cleaves both 3' and 5' ssDNA extremities of branched DNA structures. This Mycobacterium sp. (strain JLS) protein is Endonuclease NucS.